A 435-amino-acid polypeptide reads, in one-letter code: Asparagine--tRNA ligase (435 aa).

Belongs to the class-II aminoacyl-tRNA synthetase family. As to quaternary structure, homodimer.

Its subcellular location is the cytoplasm. It carries out the reaction tRNA(Asn) + L-asparagine + ATP = L-asparaginyl-tRNA(Asn) + AMP + diphosphate + H(+). The polypeptide is Asparagine--tRNA ligase (Leptospira interrogans serogroup Icterohaemorrhagiae serovar copenhageni (strain Fiocruz L1-130)).